The following is a 521-amino-acid chain: Vang-like protein 2 (521 aa).

A disordered region spans residues M1 to H81. The Cytoplasmic portion of the chain corresponds to M1–G108. A compositionally biased stretch (basic residues) spans G15–K33. Positions E57–N67 are enriched in basic and acidic residues. Residues G69–H81 are compositionally biased toward low complexity. The chain crosses the membrane as a helical span at residues V109–L129. At P130–G147 the chain is on the extracellular side. The helical transmembrane segment at L148–F168 threads the bilayer. Topologically, residues R169 to V178 are cytoplasmic. Residues F179–F199 form a helical membrane-spanning segment. Residues Y200–Q217 are Extracellular-facing. Residues F218 to E238 traverse the membrane as a helical segment. Over L239–V521 the chain is Cytoplasmic.

The protein belongs to the Vang family. Homodimer and heterodimer with VANGL1. Interacts through its C-terminal region with the N-terminal half of DVL1, DVL2 and DVL3. The PDZ domain of DVL1, DVL2 and DVL3 is required for the interaction. Also interacts with the PDZ domains of MAGI3, SCRIB/SCRB1 and FZD3. Interacts with PRICKLE3.

It is found in the cell membrane. In terms of biological role, involved in the control of early morphogenesis and patterning of both axial midline structures and the development of neural plate. Plays a role in the regulation of planar cell polarity, particularly in the orientation of stereociliary bundles in the cochlea. Required for polarization and movement of myocardializing cells in the outflow tract and seems to act via RHOA signaling to regulate this process. Required for cell surface localization of FZD3 and FZD6 in the inner ear. The chain is Vang-like protein 2 (VANGL2) from Homo sapiens (Human).